A 1065-amino-acid polypeptide reads, in one-letter code: Isoleucine--tRNA ligase (1065 aa).

The 'HIGH' region motif lies at 49 to 59; it reads PYVSGAIHLGT. The 'KMSKS' region signature appears at 625 to 629; that stretch reads KMSKS. Lysine 628 serves as a coordination point for ATP.

The protein belongs to the class-I aminoacyl-tRNA synthetase family. IleS type 2 subfamily. As to quaternary structure, monomer. Zn(2+) is required as a cofactor.

It is found in the cytoplasm. The enzyme catalyses tRNA(Ile) + L-isoleucine + ATP = L-isoleucyl-tRNA(Ile) + AMP + diphosphate. Functionally, catalyzes the attachment of isoleucine to tRNA(Ile). As IleRS can inadvertently accommodate and process structurally similar amino acids such as valine, to avoid such errors it has two additional distinct tRNA(Ile)-dependent editing activities. One activity is designated as 'pretransfer' editing and involves the hydrolysis of activated Val-AMP. The other activity is designated 'posttransfer' editing and involves deacylation of mischarged Val-tRNA(Ile). The polypeptide is Isoleucine--tRNA ligase (Thermococcus kodakarensis (strain ATCC BAA-918 / JCM 12380 / KOD1) (Pyrococcus kodakaraensis (strain KOD1))).